Here is a 125-residue protein sequence, read N- to C-terminus: Mesotocin-neurophysin MT (125 aa).

The first 19 residues, 1 to 19, serve as a signal peptide directing secretion; it reads MSYTALAVTFFGWLALSSA. Cysteines 20 and 25 form a disulfide. Position 28 is a glycine amide (Gly28). 7 cysteine pairs are disulfide-bonded: Cys42–Cys86, Cys45–Cys59, Cys53–Cys76, Cys60–Cys66, Cys93–Cys106, Cys100–Cys118, and Cys107–Cys112.

This sequence belongs to the vasopressin/oxytocin family. In terms of tissue distribution, mesotocin is produced by magnocellular preoptic neurons in the hypothalamus in amphibians, reptiles and birds.

The protein resides in the secreted. In terms of biological role, mesotocin is a diuretic hormone. The sequence is that of Mesotocin-neurophysin MT from Bufo japonicus (Japanese common toad).